A 176-amino-acid polypeptide reads, in one-letter code: Membrane glycoprotein UL144 (176 aa).

Positions 1-20 are cleaved as a signal peptide; that stretch reads MKPLIMLICFAVILLQLGVT. TNFR-Cys repeat units lie at residues 22 to 56 and 58 to 95; these read VCQH…SVTC and PCPN…NTVC. Disulfide bonds link Cys-23-Cys-34, Cys-35-Cys-48, Cys-38-Cys-56, Cys-59-Cys-71, Cys-74-Cys-87, and Cys-77-Cys-95. The helical transmembrane segment at 134–154 threads the bilayer; that stretch reads LAWLSLFIFLVGIILLILYLI.

Interacts with host TRIM23; this interaction causes auto-ubiquitination of TRAF6, leading to NF-kappaB activation.

The protein resides in the membrane. In terms of biological role, activates NF-kappaB in a tumor necrosis factor receptor (TNFR)-associated factor 6 (TRAF6)-dependent manner, causing the up-regulation of the chemokine CCL22. The polypeptide is Membrane glycoprotein UL144 (UL144) (Homo sapiens (Human)).